Here is a 318-residue protein sequence, read N- to C-terminus: Methionyl-tRNA formyltransferase (318 aa).

112-115 (SILP) is a (6S)-5,6,7,8-tetrahydrofolate binding site.

It belongs to the Fmt family.

The catalysed reaction is L-methionyl-tRNA(fMet) + (6R)-10-formyltetrahydrofolate = N-formyl-L-methionyl-tRNA(fMet) + (6S)-5,6,7,8-tetrahydrofolate + H(+). Attaches a formyl group to the free amino group of methionyl-tRNA(fMet). The formyl group appears to play a dual role in the initiator identity of N-formylmethionyl-tRNA by promoting its recognition by IF2 and preventing the misappropriation of this tRNA by the elongation apparatus. This Shewanella baltica (strain OS223) protein is Methionyl-tRNA formyltransferase.